The following is a 357-amino-acid chain: DNA replication and repair protein RecF (357 aa).

Residue 30 to 37 (GANGSGKT) coordinates ATP.

It belongs to the RecF family.

It localises to the cytoplasm. In terms of biological role, the RecF protein is involved in DNA metabolism; it is required for DNA replication and normal SOS inducibility. RecF binds preferentially to single-stranded, linear DNA. It also seems to bind ATP. The protein is DNA replication and repair protein RecF of Shigella dysenteriae serotype 1 (strain Sd197).